We begin with the raw amino-acid sequence, 439 residues long: Protein pop-1 (439 aa).

The interval 1–38 (MMADEELGDEVKVFRRDEDADDDPMISGETSEQQLADD) is disordered. Positions 9 to 18 (DEVKVFRRDE) are enriched in basic and acidic residues. An involved in nuclear asymmetry region spans residues 87-138 (SGLPIMFPMVVPQYLSPNPNINMMNMMTMRAAMAGAPLSPAFPAMFSPNPLF). S125 carries the post-translational modification Phosphoserine; by LIT1. The HMG box DNA-binding region spans 199-269 (IKKPLNAFMW…SHKEKYPQWS (71 aa)). A compositionally biased stretch (basic and acidic residues) spans 254–265 (AKKDRESHKEKY). 3 disordered regions span residues 254–298 (AKKD…NNDQ), 329–365 (RSGSELNDGHDGRGTSGGCSSSSESSSPNNNQPMPMN), and 385–439 (SAHL…VCTL). Positions 277-286 (NKKKPKRKRD) are enriched in basic residues. Composition is skewed to low complexity over residues 346–365 (GCSSSSESSSPNNNQPMPMN) and 385–400 (SAHLASSHSTGSSGTS). Positions 409–420 (SESDVDEDEDID) are enriched in acidic residues. Over residues 422-439 (TITQQTQEYIMQESVCTL) the composition is skewed to polar residues.

Belongs to the TCF/LEF family. As to quaternary structure, interacts with hda-1. Interacts with bar-1. Interacts with par-5; the interaction is direct and is enhanced by lit-1-mediated pop-1 phosphorylation. The interaction also leads to the subsequent nuclear export of pop-1. Interacts (when phosphorylated on Ser-125) with lit-1; the interaction is dependent on the beta-catenin-lit-1 complex. Interacts with wrm-1. In terms of processing, phosphorylated on Ser-125 by lit-1 in the beta-catenin-lit-1 complex. Phosphorylation promotes the interaction of pop-1 and par-5 and the subsequent translocation of pop-1 from the nucleus to the cytoplasm.

It is found in the nucleus. It localises to the cytoplasm. In terms of biological role, part of the Wnt signaling pathway essential for the specification of the mesodermal cell fate in early embryos. Required for asymmetrical division of somatic gonadal precursor descendants which initiate axis formation required to control organ shape. Similarly, involved in asymmetrical division of seam cells, a stem cell-like lineage. Represses expression of target genes via its interaction with hda-1 histone deacetylase. Required for specification of the M lineage-derived coelomocyte and sex myoblast fate. Regulates coelomocyte fate by positively regulating proliferation and ceh-34 and possibly eya-1 expression in M.dlpa and M.drpa precursors. This Caenorhabditis briggsae protein is Protein pop-1.